The sequence spans 156 residues: ATP synthase subunit b (156 aa).

A helical transmembrane segment spans residues 12 to 32; that stretch reads VAFLIFVLFCMKYVWPPVITA.

It belongs to the ATPase B chain family. In terms of assembly, F-type ATPases have 2 components, F(1) - the catalytic core - and F(0) - the membrane proton channel. F(1) has five subunits: alpha(3), beta(3), gamma(1), delta(1), epsilon(1). F(0) has three main subunits: a(1), b(2) and c(10-14). The alpha and beta chains form an alternating ring which encloses part of the gamma chain. F(1) is attached to F(0) by a central stalk formed by the gamma and epsilon chains, while a peripheral stalk is formed by the delta and b chains.

Its subcellular location is the cell inner membrane. F(1)F(0) ATP synthase produces ATP from ADP in the presence of a proton or sodium gradient. F-type ATPases consist of two structural domains, F(1) containing the extramembraneous catalytic core and F(0) containing the membrane proton channel, linked together by a central stalk and a peripheral stalk. During catalysis, ATP synthesis in the catalytic domain of F(1) is coupled via a rotary mechanism of the central stalk subunits to proton translocation. In terms of biological role, component of the F(0) channel, it forms part of the peripheral stalk, linking F(1) to F(0). The chain is ATP synthase subunit b from Pseudomonas putida (strain GB-1).